Consider the following 361-residue polypeptide: tRNA 2-selenouridine synthase (361 aa).

In terms of domain architecture, Rhodanese spans 12–135; sequence VLKNIPLIDV…FRRYLIDHLE (124 aa). The active-site S-selanylcysteine intermediate is the Cys-95.

Belongs to the SelU family. In terms of assembly, monomer.

The catalysed reaction is 5-methylaminomethyl-2-thiouridine(34) in tRNA + selenophosphate + (2E)-geranyl diphosphate + H2O + H(+) = 5-methylaminomethyl-2-selenouridine(34) in tRNA + (2E)-thiogeraniol + phosphate + diphosphate. It catalyses the reaction 5-methylaminomethyl-2-thiouridine(34) in tRNA + (2E)-geranyl diphosphate = 5-methylaminomethyl-S-(2E)-geranyl-thiouridine(34) in tRNA + diphosphate. The enzyme catalyses 5-methylaminomethyl-S-(2E)-geranyl-thiouridine(34) in tRNA + selenophosphate + H(+) = 5-methylaminomethyl-2-(Se-phospho)selenouridine(34) in tRNA + (2E)-thiogeraniol. It carries out the reaction 5-methylaminomethyl-2-(Se-phospho)selenouridine(34) in tRNA + H2O = 5-methylaminomethyl-2-selenouridine(34) in tRNA + phosphate. Involved in the post-transcriptional modification of the uridine at the wobble position (U34) of tRNA(Lys), tRNA(Glu) and tRNA(Gln). Catalyzes the conversion of 2-thiouridine (S2U-RNA) to 2-selenouridine (Se2U-RNA). Acts in a two-step process involving geranylation of 2-thiouridine (S2U) to S-geranyl-2-thiouridine (geS2U) and subsequent selenation of the latter derivative to 2-selenouridine (Se2U) in the tRNA chain. This chain is tRNA 2-selenouridine synthase, found in Hydrogenovibrio crunogenus (strain DSM 25203 / XCL-2) (Thiomicrospira crunogena).